The sequence spans 867 residues: Probable alpha,alpha-trehalose-phosphate synthase [UDP-forming] 9 (867 aa).

Phosphoserine is present on Ser5. Thr32 carries the post-translational modification Phosphothreonine. The tract at residues 59–546 (ERKIIVANML…AKSFMQDLER (488 aa)) is glycosyltransferase.

In the N-terminal section; belongs to the glycosyltransferase 20 family. The protein in the C-terminal section; belongs to the trehalose phosphatase family.

It catalyses the reaction D-glucose 6-phosphate + UDP-alpha-D-glucose = alpha,alpha-trehalose 6-phosphate + UDP + H(+). The polypeptide is Probable alpha,alpha-trehalose-phosphate synthase [UDP-forming] 9 (TPS9) (Arabidopsis thaliana (Mouse-ear cress)).